The following is a 906-amino-acid chain: Ankyrin repeat and MYND domain-containing protein 1 (906 aa).

MORN repeat units follow at residues 16–38 (YHGQ…DGSS), 39–59 (FTGT…TKTM), and 61–83 (FQGL…DGSQ). One copy of the ANK 1 repeat lies at 282–311 (KGYTVLAAAAMHSHLDIVNLLLDFGADVNK). Residues 391-400 (SMQTPESSNM) are compositionally biased toward polar residues. The tract at residues 391-411 (SMQTPESSNMLHKEEVSPVKT) is disordered. ANK repeat units lie at residues 479 to 508 (VRKM…DPNL), 511 to 540 (VPMQ…QTDI), 547 to 579 (QSLT…NVDA), 623 to 657 (GGRT…NPNV), 660 to 689 (SGHS…DPNL), and 701 to 732 (VVCD…DVLN). Zn(2+) is bound by residues Cys845, Cys848, Cys859, Cys862, Cys868, Cys872, His881, and Cys885. The MYND-type zinc-finger motif lies at 845–885 (CYQCGRSIGVRLSPCPRCYGILTCSKYCKTKAWIEFHKKDC).

The sequence is that of Ankyrin repeat and MYND domain-containing protein 1 (Ankmy1) from Mus musculus (Mouse).